The following is a 158-amino-acid chain: Transcription elongation factor GreA (158 aa).

Residues 53 to 73 (EQQSFVEGRIQEIEGKLSNAQ) are a coiled coil.

Belongs to the GreA/GreB family.

Necessary for efficient RNA polymerase transcription elongation past template-encoded arresting sites. The arresting sites in DNA have the property of trapping a certain fraction of elongating RNA polymerases that pass through, resulting in locked ternary complexes. Cleavage of the nascent transcript by cleavage factors such as GreA or GreB allows the resumption of elongation from the new 3'terminus. GreA releases sequences of 2 to 3 nucleotides. The sequence is that of Transcription elongation factor GreA from Alkalilimnicola ehrlichii (strain ATCC BAA-1101 / DSM 17681 / MLHE-1).